Consider the following 1551-residue polypeptide: ABC-type transporter phomO (1551 aa).

A run of 7 helical transmembrane segments spans residues 34-54 (LYFE…LLAA), 110-130 (CTAG…CTTV), 139-159 (SVPA…LAHF), 172-192 (SSSL…APLV), 202-222 (GSAL…LIAV), 314-334 (LGLY…FTLA), and 358-378 (GLIG…GWYW). The ABC transmembrane type-1 1 domain occupies 326–599 (LCLAGFTLAQ…LLQIIPSFGA (274 aa)). The N-linked (GlcNAc...) asparagine glycan is linked to N384. 4 helical membrane passes run 428 to 448 (LAYA…TWML), 452 to 472 (VGPP…ASTY), 535 to 555 (LIVG…VLVF), and 577 to 597 (LIWI…IPSF). The ABC transporter 1 domain occupies 645-861 (IHNSSFSYTD…VEDENGDVDN (217 aa)). Residue N647 is glycosylated (N-linked (GlcNAc...) asparagine). ATP is bound at residue 678 to 685 (GPAGCGKS). N721 carries N-linked (GlcNAc...) asparagine glycosylation. The disordered stretch occupies residues 843 to 889 (YQFPPSQADVEDENGDVDNGAENTRPRESSHTTEAQSGPPEPKSKPT). The next 4 membrane-spanning stretches (helical) occupy residues 903 to 923 (SIGF…AFCL), 959 to 979 (VLPL…IVPL), 1027 to 1044 (LFNT…VILI), and 1137 to 1157 (LVLN…AVGL). Residues 910-1199 (VLFIGGGIIF…LLTAWTSLET (290 aa)) form the ABC transmembrane type-1 2 domain. N-linked (GlcNAc...) asparagine glycosylation occurs at N1179. The segment covering 1219-1228 (DVLVRPDSLD) has biased composition (basic and acidic residues). A disordered region spans residues 1219-1296 (DVLVRPDSLD…HEATTITTTS (78 aa)). Acidic residues predominate over residues 1259-1270 (YDDDDESDENTD). The ABC transporter 2 domain maps to 1287-1535 (HEATTITTTS…SDIFAFFGRS (249 aa)). 1323–1330 (GRTGSGKS) contributes to the ATP binding site. N1486 carries N-linked (GlcNAc...) asparagine glycosylation.

This sequence belongs to the ABC transporter superfamily. ABCC family. Conjugate transporter (TC 3.A.1.208) subfamily.

It localises to the membrane. ABC-type transporter; part of the gene cluster that mediates the biosynthesis of the phomopsins, a group of hexapeptide mycotoxins which infects lupins and causes lupinosis disease in livestock. This is ABC-type transporter phomO from Diaporthe leptostromiformis (Lupinosis disease fungus).